We begin with the raw amino-acid sequence, 271 residues long: Formamidopyrimidine-DNA glycosylase (271 aa).

P2 functions as the Schiff-base intermediate with DNA in the catalytic mechanism. The Proton donor role is filled by E3. K57 (proton donor; for beta-elimination activity) is an active-site residue. Positions 90, 109, and 151 each coordinate DNA. The FPG-type zinc finger occupies 236 to 270 (HVYSRGGETCTSCGNLLSEIRLGQRTTVFCGICQT). The Proton donor; for delta-elimination activity role is filled by R260.

It belongs to the FPG family. As to quaternary structure, monomer. Requires Zn(2+) as cofactor.

It catalyses the reaction Hydrolysis of DNA containing ring-opened 7-methylguanine residues, releasing 2,6-diamino-4-hydroxy-5-(N-methyl)formamidopyrimidine.. The catalysed reaction is 2'-deoxyribonucleotide-(2'-deoxyribose 5'-phosphate)-2'-deoxyribonucleotide-DNA = a 3'-end 2'-deoxyribonucleotide-(2,3-dehydro-2,3-deoxyribose 5'-phosphate)-DNA + a 5'-end 5'-phospho-2'-deoxyribonucleoside-DNA + H(+). Its function is as follows. Involved in base excision repair of DNA damaged by oxidation or by mutagenic agents. Acts as a DNA glycosylase that recognizes and removes damaged bases. Has a preference for oxidized purines, such as 7,8-dihydro-8-oxoguanine (8-oxoG). Has AP (apurinic/apyrimidinic) lyase activity and introduces nicks in the DNA strand. Cleaves the DNA backbone by beta-delta elimination to generate a single-strand break at the site of the removed base with both 3'- and 5'-phosphates. The protein is Formamidopyrimidine-DNA glycosylase of Shewanella baltica (strain OS195).